The following is a 411-amino-acid chain: 3-phosphoshikimate 1-carboxyvinyltransferase (411 aa).

Residues Lys-20, Ser-21, and Arg-25 each contribute to the 3-phosphoshikimate site. Lys-20 lines the phosphoenolpyruvate pocket. The phosphoenolpyruvate site is built by Gly-86 and Arg-114. The 3-phosphoshikimate site is built by Ser-156, Ser-157, Gln-158, Ser-181, Asp-295, and Lys-322. Gln-158 lines the phosphoenolpyruvate pocket. Asp-295 serves as the catalytic Proton acceptor. Phosphoenolpyruvate-binding residues include Arg-326, Arg-367, and Lys-393.

This sequence belongs to the EPSP synthase family. As to quaternary structure, monomer.

The protein resides in the cytoplasm. It carries out the reaction 3-phosphoshikimate + phosphoenolpyruvate = 5-O-(1-carboxyvinyl)-3-phosphoshikimate + phosphate. It functions in the pathway metabolic intermediate biosynthesis; chorismate biosynthesis. Its function is as follows. Catalyzes the transfer of the enolpyruvyl moiety of phosphoenolpyruvate (PEP) to the 5-hydroxyl of shikimate-3-phosphate (S3P) to produce enolpyruvyl shikimate-3-phosphate and inorganic phosphate. This is 3-phosphoshikimate 1-carboxyvinyltransferase from Picrophilus torridus (strain ATCC 700027 / DSM 9790 / JCM 10055 / NBRC 100828 / KAW 2/3).